The primary structure comprises 457 residues: Bifunctional protein GlmU (457 aa).

The tract at residues 1-230 is pyrophosphorylase; sequence MPLSLPLHIV…AREVEGVNDL (230 aa). UDP-N-acetyl-alpha-D-glucosamine contacts are provided by residues 12–15, K26, Q78, 83–84, 105–107, G140, E155, N170, and N228; these read LAAG, GT, and YGD. Position 107 (D107) interacts with Mg(2+). Position 228 (N228) interacts with Mg(2+). The segment at 231 to 251 is linker; that stretch reads WQLTQLERAWQIRAARALCLQ. An N-acetyltransferase region spans residues 252–457; sequence GARVADPARL…DSWQRPKKKT (206 aa). The UDP-N-acetyl-alpha-D-glucosamine site is built by R334 and K352. H364 acts as the Proton acceptor in catalysis. Positions 367 and 378 each coordinate UDP-N-acetyl-alpha-D-glucosamine. Acetyl-CoA is bound by residues A381, 387 to 388, S406, A424, and R441; that span reads NY.

The protein in the N-terminal section; belongs to the N-acetylglucosamine-1-phosphate uridyltransferase family. It in the C-terminal section; belongs to the transferase hexapeptide repeat family. In terms of assembly, homotrimer. Requires Mg(2+) as cofactor.

It is found in the cytoplasm. It catalyses the reaction alpha-D-glucosamine 1-phosphate + acetyl-CoA = N-acetyl-alpha-D-glucosamine 1-phosphate + CoA + H(+). The enzyme catalyses N-acetyl-alpha-D-glucosamine 1-phosphate + UTP + H(+) = UDP-N-acetyl-alpha-D-glucosamine + diphosphate. Its pathway is nucleotide-sugar biosynthesis; UDP-N-acetyl-alpha-D-glucosamine biosynthesis; N-acetyl-alpha-D-glucosamine 1-phosphate from alpha-D-glucosamine 6-phosphate (route II): step 2/2. The protein operates within nucleotide-sugar biosynthesis; UDP-N-acetyl-alpha-D-glucosamine biosynthesis; UDP-N-acetyl-alpha-D-glucosamine from N-acetyl-alpha-D-glucosamine 1-phosphate: step 1/1. It participates in bacterial outer membrane biogenesis; LPS lipid A biosynthesis. Functionally, catalyzes the last two sequential reactions in the de novo biosynthetic pathway for UDP-N-acetylglucosamine (UDP-GlcNAc). The C-terminal domain catalyzes the transfer of acetyl group from acetyl coenzyme A to glucosamine-1-phosphate (GlcN-1-P) to produce N-acetylglucosamine-1-phosphate (GlcNAc-1-P), which is converted into UDP-GlcNAc by the transfer of uridine 5-monophosphate (from uridine 5-triphosphate), a reaction catalyzed by the N-terminal domain. The polypeptide is Bifunctional protein GlmU (Xylella fastidiosa (strain 9a5c)).